The chain runs to 116 residues: Protein aq_1857 (116 aa).

This sequence belongs to the HesB/IscA family.

The protein is Protein aq_1857 of Aquifex aeolicus (strain VF5).